A 257-amino-acid chain; its full sequence is uncharacterized protein (257 aa).

A signal peptide spans 1-22 (MGYLKRFALYISVMILMFAIAG). Cysteine 23 carries N-palmitoyl cysteine lipidation. A lipid anchor (S-diacylglycerol cysteine) is attached at cysteine 23.

This sequence belongs to the staphylococcal tandem lipoprotein family.

It localises to the cell membrane. This is an uncharacterized protein from Staphylococcus aureus (strain MRSA252).